We begin with the raw amino-acid sequence, 355 residues long: C-C chemokine receptor type 1 (355 aa).

The Extracellular segment spans residues 1 to 34 (METPDTTENYDMITEFDYGDATPCHKVNERAILA). Residues 35–60 (QLLPPLYSLVFVIGVVGNLLVVLVLV) traverse the membrane as a helical segment. Topologically, residues 61 to 64 (QYKR) are cytoplasmic. Residues 65–91 (LKNMTNIYLLNLAISDLLFLFTLPFLI) traverse the membrane as a helical segment. At 92 to 107 (YYKSTDDWIFGDAMCK) the chain is on the extracellular side. Cysteines 106 and 183 form a disulfide. Residues 108–129 (ILSGFYYTGLYSEIFFIILLTI) traverse the membrane as a helical segment. Over 130–146 (DRYLAIVHAVFALRART) the chain is Cytoplasmic. The helical transmembrane segment at 147-171 (VTFGVITSIIIWALAILASSPLMYF) threads the bilayer. At 172–197 (SKTQWNIVRHSCNLHFPYESFQQWKL) the chain is on the extracellular side. Residues 198–223 (FQALKLNLFGLVLPLLVMIVCYTGII) form a helical membrane-spanning segment. At 224–239 (KILLRRPNEKKSKAVR) the chain is on the cytoplasmic side. Residues 240-264 (LIFVIMIIFFLFWTPYNLTELISVF) form a helical membrane-spanning segment. The Extracellular segment spans residues 265–281 (QEFLFTHLCEQNRQLDL). The chain crosses the membrane as a helical span at residues 282 to 305 (AMEVTEVIANMHCCVNPVIYAFAG). Over 306–355 (ERFRKYLRQLFHRRVAVHLVKWLPFLSGDRLERVSSTSPSTGEHELSAGL) the chain is Cytoplasmic.

This sequence belongs to the G-protein coupled receptor 1 family. In terms of assembly, interacts with CREB3. Interacts with CCL3. Interacts with CCL15. Interacts with CCL23. Interacts with GNAI1. Interacts with PF4/CXCL4.

It is found in the cell membrane. Chemokine receptor that plays a crucial role in regulating immune cell migration, inflammation, and immune responses. Contributes to the inflammatory response by recruiting immune cells, such as monocytes, macrophages, T-cells, and dendritic cells, to sites of inflammation for the clearance of pathogens and the resolution of tissue damage. When activated by its ligands including CCL3, CCL5-9, CCL13-16 and CCL23, triggers a signaling cascade within immune cells, leading to their migration towards the source of the chemokine. For example, mediates neutrophil migration after activation by CCL3 leading to the sequential release of TNF-alpha and leukotriene B4. Also mediates monocyte migration upon CXCL4 binding. Activation by CCL5 results in neuroinflammation through the ERK1/2 signaling pathway. The sequence is that of C-C chemokine receptor type 1 (CCR1) from Macaca fascicularis (Crab-eating macaque).